Here is a 344-residue protein sequence, read N- to C-terminus: sn-glycerol-3-phosphate import ATP-binding protein UgpC 2 (344 aa).

One can recognise an ABC transporter domain in the interval 4–234; that stretch reads IELIDLKKNY…PETVFVAGFI (231 aa). 36–43 contacts ATP; the sequence is GPSGCGKS.

Belongs to the ABC transporter superfamily. sn-glycerol-3-phosphate importer (TC 3.A.1.1.3) family. The complex is composed of two ATP-binding proteins (UgpC), two transmembrane proteins (UgpA and UgpE) and a solute-binding protein (UgpB).

It is found in the cell inner membrane. The enzyme catalyses sn-glycerol 3-phosphate(out) + ATP + H2O = sn-glycerol 3-phosphate(in) + ADP + phosphate + H(+). Part of the ABC transporter complex UgpBAEC involved in sn-glycerol-3-phosphate (G3P) import. Responsible for energy coupling to the transport system. The protein is sn-glycerol-3-phosphate import ATP-binding protein UgpC 2 of Rhizobium johnstonii (strain DSM 114642 / LMG 32736 / 3841) (Rhizobium leguminosarum bv. viciae).